The following is a 181-amino-acid chain: Ribulose bisphosphate carboxylase small subunit, chloroplastic 6 (181 aa).

Residues 1–57 (MASSIVSSAAVATRSNVAQASMVAPFTGLKSAASFPVTKKNNNVDITSLASNGGRVR) constitute a chloroplast transit peptide.

It belongs to the RuBisCO small chain family. In terms of assembly, heterohexadecamer of 8 large and 8 small subunits.

It localises to the plastid. The protein localises to the chloroplast. Functionally, ruBisCO catalyzes two reactions: the carboxylation of D-ribulose 1,5-bisphosphate, the primary event in carbon dioxide fixation, as well as the oxidative fragmentation of the pentose substrate. Both reactions occur simultaneously and in competition at the same active site. Although the small subunit is not catalytic it is essential for maximal activity. This Solanum tuberosum (Potato) protein is Ribulose bisphosphate carboxylase small subunit, chloroplastic 6.